Reading from the N-terminus, the 562-residue chain is MKRARLEDDFNPVYPYEHYNPLDIPFITPPFASSNGLQEKPPGVLSLKYTDPLTTKNGALTLKLGTGLNIDENGDLSSDASVEVSAPITKTNKIVGLNYTKPLALRSNALTLSYNAPLNVVNNNLALNISQPVTVNANNELSLLIDAPLNADTGTLRLQSAAPLGLVDKTLKVLFSSPLYLDNNFLTLAIERPLALSSSRAVTLKYSPPLKIENENLTLSTGGPFTVSGGNLNLTTSAPLSVQNNSLSLVITSPLKVINSMLAVGVNPPFTITDSGLAMDLGDGLALGGSKLIINLGPGLQMSNGAITLALDAALPLQYRDNQLQLRIGSTSGLIMSGVTQTLNVNANTGKGLAVENNSLVVKLGNGLRFDSWGSITVSPTTTTPTTLWTTADPSPNATFYESLDAKVWLVLVKCNGMVNGTISIKAQKGILLRPTASFISFVMYFYSDGTWRKNYPVFDNEGILANSATWGYRQGQSANTNVSNAVEFMPSSKRYPNQKGSEVQNMALTYTFLQGDPNMAISFQSIYNHALEGYSLKFTWRVRNNERFDIPCCSFSYVTEQ.

It belongs to the adenoviridae fiber family. In terms of assembly, homotrimer. Interacts with host receptor CXCAR. Interacts (via N-terminal tail region) with pentons.

The protein resides in the virion. It is found in the host nucleus. In terms of biological role, forms spikes that protrude from each vertex of the icosahedral capsid. Interacts with host receptor CXCAR to provide virion initial attachment to target cell. Fiber proteins are shed during virus entry, when virus is still at the cell surface. This chain is Fiber protein 1, found in Homo sapiens (Human).